The primary structure comprises 228 residues: Response regulator SaeR (228 aa).

One can recognise a Response regulatory domain in the interval 3 to 116 (HLLIVDDEQD…ELVLRINNLL (114 aa)). D51 bears the 4-aspartylphosphate mark. The ompR/PhoB-type DNA-binding region spans 127–226 (VEQLSFDELT…VWGLGYKFER (100 aa)).

Phosphorylated by SaeS.

Its subcellular location is the cytoplasm. In terms of biological role, member of the two-component regulatory system SaeR/SaeS involved in the regulation of staphylococcal virulence factors in a strain-dependent fashion. Probably functions as a transcriptional regulator via a specific DNA-binding domain, recognizing motifs near the promoter sequences of target genes. This chain is Response regulator SaeR (saeR), found in Staphylococcus aureus (strain USA300).